Reading from the N-terminus, the 322-residue chain is NADH-quinone oxidoreductase subunit H (322 aa).

A run of 9 helical transmembrane segments spans residues 15–35 (FFKV…LSIV), 50–69 (NRVG…KILF), 81–101 (FIFV…IPII), 114–134 (IGIL…LFAG), 149–169 (ACVQ…GVVA), 186–206 (IWNV…GLAV), 237–257 (FFIG…TLFF), 265–285 (IPGC…FILI), and 302–322 (WKFC…LILV).

It belongs to the complex I subunit 1 family. NDH-1 is composed of 13 different subunits. Subunits NuoA, H, J, K, L, M, N constitute the membrane sector of the complex.

Its subcellular location is the cell membrane. The enzyme catalyses a quinone + NADH + 5 H(+)(in) = a quinol + NAD(+) + 4 H(+)(out). NDH-1 shuttles electrons from NADH, via FMN and iron-sulfur (Fe-S) centers, to quinones in the respiratory chain. The immediate electron acceptor for the enzyme in this species is believed to be ubiquinone. Couples the redox reaction to proton translocation (for every two electrons transferred, four hydrogen ions are translocated across the cytoplasmic membrane), and thus conserves the redox energy in a proton gradient. This subunit may bind ubiquinone. The chain is NADH-quinone oxidoreductase subunit H from Buchnera aphidicola subsp. Acyrthosiphon pisum (strain 5A).